The following is a 279-amino-acid chain: Oxygen-dependent coproporphyrinogen-III oxidase (279 aa).

Position 102 (Ser-102) interacts with substrate. Residues His-106 and His-116 each coordinate a divalent metal cation. The active-site Proton donor is His-116. Position 118 to 120 (118 to 120 (NTR)) interacts with substrate. His-149 and His-179 together coordinate a divalent metal cation. The important for dimerization stretch occupies residues 244 to 279 (YVEFNLLYDRGTKFGLMTDGNVEAILMSLPPEVKFN).

Belongs to the aerobic coproporphyrinogen-III oxidase family. In terms of assembly, homodimer. It depends on a divalent metal cation as a cofactor.

Its subcellular location is the cytoplasm. The enzyme catalyses coproporphyrinogen III + O2 + 2 H(+) = protoporphyrinogen IX + 2 CO2 + 2 H2O. It functions in the pathway porphyrin-containing compound metabolism; protoporphyrin-IX biosynthesis; protoporphyrinogen-IX from coproporphyrinogen-III (O2 route): step 1/1. Functionally, involved in the heme biosynthesis. Catalyzes the aerobic oxidative decarboxylation of propionate groups of rings A and B of coproporphyrinogen-III to yield the vinyl groups in protoporphyrinogen-IX. This Rickettsia conorii (strain ATCC VR-613 / Malish 7) protein is Oxygen-dependent coproporphyrinogen-III oxidase.